The primary structure comprises 388 residues: Basigin (388 aa).

Positions methionine 1–alanine 22 are cleaved as a signal peptide. Over alanine 23 to alanine 326 the chain is Extracellular. An Ig-like domain is found at glycine 37–threonine 120. 3 disulfide bridges follow: cysteine 44-cysteine 108, cysteine 157-cysteine 203, and cysteine 242-cysteine 304. Residues glutamate 138–glycine 219 enclose the Ig-like C2-type domain. Asparagine 160, asparagine 269, and asparagine 305 each carry an N-linked (GlcNAc...) asparagine glycan. An Ig-like V-type domain is found at proline 221–arginine 320. The helical transmembrane segment at alanine 327 to isoleucine 347 threads the bilayer. Over tyrosine 348–threonine 388 the chain is Cytoplasmic. The disordered stretch occupies residues aspartate 355–threonine 388. Threonine 357 carries the phosphothreonine modification. Serine 371 is subject to Phosphoserine.

As to quaternary structure, homooligomer. Interacts with NXNL1, SLC2A1 and SLC16A1/GLUT1. Interacts with XKR8; promoting its localization at the cell membrane. Homooligomer. Interacts with SLC16A1; interaction mediates SLC16A1 targeting to the plasma membrane. Interacts with SLC16A3; interaction mediates SLC16A3 targeting to the plasma membrane. Interacts with VEGFA, KDR/VEGFR2, PPIA/CYPA, SLC16A12, SLC16A11, ATP1B2, MAG, L1CAM and AJAP1. Interacts with PPIL2; regulates BSG transport to the cell membrane. In terms of assembly, interacts with SLC16A6; this interaction mediates targeting to the plasma membrane. As to expression, expressed in the skeletal muscle, liver, small intestine, kidney, testis, brain, heart and spleen. Also present in various immature cells and endothelia.

The protein localises to the cell membrane. It localises to the photoreceptor inner segment. Its subcellular location is the cell projection. The protein resides in the cilium. It is found in the photoreceptor outer segment. The protein localises to the endoplasmic reticulum membrane. It localises to the basolateral cell membrane. Essential for normal retinal maturation and development. Acts as a retinal cell surface receptor for NXNL1 and plays an important role in NXNL1-mediated survival of retinal cone photoreceptors. In association with glucose transporter SLC16A1/GLUT1 and NXNL1, promotes retinal cone survival by enhancing aerobic glycolysis and accelerating the entry of glucose into photoreceptors. Its function is as follows. Signaling receptor for cyclophilins, essential for PPIA/CYPA and PPIB/CYPB-dependent signaling related to chemotaxis and adhesion of immune cells. Plays an important role in targeting the monocarboxylate transporters SLC16A1/GLUT1 and SLC16A3 to the plasma membrane. Acts as a coreceptor for vascular endothelial growth factor receptor 2 (KDR/VEGFR2) in endothelial cells enhancing its VEGFA-mediated activation and downstream signaling. Promotes angiogenesis through EPAS1/HIF2A-mediated up-regulation of VEGFA and KDR/VEGFR2 in endothelial cells. Plays an important role in spermatogenesis; mediates interactions between germ cells and Sertoli cell and is essential for the development/differentiation of germ cells to round spermatids. The sequence is that of Basigin (Bsg) from Rattus norvegicus (Rat).